We begin with the raw amino-acid sequence, 369 residues long: Cobalt-precorrin-5B C(1)-methyltransferase (369 aa).

The protein belongs to the CbiD family.

It catalyses the reaction Co-precorrin-5B + S-adenosyl-L-methionine = Co-precorrin-6A + S-adenosyl-L-homocysteine. It functions in the pathway cofactor biosynthesis; adenosylcobalamin biosynthesis; cob(II)yrinate a,c-diamide from sirohydrochlorin (anaerobic route): step 6/10. Catalyzes the methylation of C-1 in cobalt-precorrin-5B to form cobalt-precorrin-6A. The chain is Cobalt-precorrin-5B C(1)-methyltransferase from Methanococcus vannielii (strain ATCC 35089 / DSM 1224 / JCM 13029 / OCM 148 / SB).